Reading from the N-terminus, the 309-residue chain is Protoheme IX farnesyltransferase (309 aa).

Helical transmembrane passes span 30–49 (VMSL…PGGV), 53–75 (IGFT…NMWY), 98–118 (AGEA…MLGL), 123–143 (VAAG…SMWL), 151–171 (IVIG…AVTG), 178–198 (VLMF…LALF), 224–244 (ILIY…TEVA), 247–267 (VYLI…YDIW), and 285–305 (VFKF…LDAI).

It belongs to the UbiA prenyltransferase family. Protoheme IX farnesyltransferase subfamily. Interacts with CtaA.

It localises to the cell inner membrane. It carries out the reaction heme b + (2E,6E)-farnesyl diphosphate + H2O = Fe(II)-heme o + diphosphate. Its pathway is porphyrin-containing compound metabolism; heme O biosynthesis; heme O from protoheme: step 1/1. Converts heme B (protoheme IX) to heme O by substitution of the vinyl group on carbon 2 of heme B porphyrin ring with a hydroxyethyl farnesyl side group. The chain is Protoheme IX farnesyltransferase from Jannaschia sp. (strain CCS1).